A 285-amino-acid polypeptide reads, in one-letter code: Ribonuclease H1 (285 aa).

The tract at residues 72 to 126 (RSSSSPDGSKGQESAHEQKSQAKTSKRPREPLGEGEELPEPGPKHTRQDTEPAAV) is disordered. The 147-residue stretch at 135-281 (MGESVIVYTD…ADRLAREGAK (147 aa)) folds into the RNase H type-1 domain. The Mg(2+) site is built by aspartate 144, glutamate 185, aspartate 209, and aspartate 273.

This sequence belongs to the RNase H family. In terms of assembly, monomer. It depends on Mg(2+) as a cofactor.

The protein localises to the cytoplasm. It catalyses the reaction Endonucleolytic cleavage to 5'-phosphomonoester.. In the presence of magnesium, manganese is inhibitory. Endonuclease that specifically degrades the RNA of RNA-DNA hybrids. Plays a role in RNA polymerase II (RNAp II) transcription termination by degrading R-loop RNA-DNA hybrid formation at G-rich pause sites located downstream of the poly(A) site and behind the elongating RNAp II. This chain is Ribonuclease H1 (Rnaseh1), found in Mus musculus (Mouse).